Reading from the N-terminus, the 631-residue chain is RNA polymerase sigma factor RpoD (631 aa).

Residues 395–465 are sigma-70 factor domain-2; it reads LIKANLRLVV…TRSISDQART (71 aa). The Interaction with polymerase core subunit RpoC motif lies at 419 to 422; the sequence is DLVQ. The interval 474-550 is sigma-70 factor domain-3; that stretch reads EQINRLNRET…DKAIKNPANH (77 aa). The segment at 563 to 616 is sigma-70 factor domain-4; sequence ILGTLPEREQEVVKMRFGLEDGYSLTLEEVGLHFNVTRERIRQIESKALRRLKN. Residues 589-608 constitute a DNA-binding region (H-T-H motif); sequence LEEVGLHFNVTRERIRQIES.

It belongs to the sigma-70 factor family. RpoD/SigA subfamily. As to quaternary structure, interacts transiently with the RNA polymerase catalytic core.

It is found in the cytoplasm. Sigma factors are initiation factors that promote the attachment of RNA polymerase to specific initiation sites and are then released. This sigma factor is the primary sigma factor during exponential growth. The sequence is that of RNA polymerase sigma factor RpoD from Borreliella burgdorferi (strain ATCC 35210 / DSM 4680 / CIP 102532 / B31) (Borrelia burgdorferi).